Reading from the N-terminus, the 871-residue chain is Protein TIC 100 (871 aa).

The segment at 1 to 85 (MANEELTESQ…NANPETNIRR (85 aa)) is disordered. Residues 8 to 20 (ESQQQEDPSQQLP) are compositionally biased toward polar residues. The segment covering 30-46 (SDSNSDSDASSQSSGDD) has biased composition (low complexity). MORN repeat units lie at residues 219–239 (YEGT…AENG), 243–257 (YEGE…GHGV), and 337–352 (YAGQ…CGVY). Deamidated asparagine is present on Asn-238. The stretch at 587–647 (MLDGLEKWTE…QEEEKKTEMG (61 aa)) forms a coiled coil. 2 disordered regions span residues 631 to 654 (EELK…EDED) and 669 to 721 (KEKI…NSPF). Residues 632–645 (ELKKKEQEEEKKTE) show a composition bias toward basic and acidic residues. Thr-649 bears the Phosphothreonine mark. Positions 669-683 (KEKIQENKQEEKYKD) are enriched in basic and acidic residues. Residues 684-704 (DDDEDDDDGDDDDDDDDDDDL) show a composition bias toward acidic residues.

As to quaternary structure, part of the Tic complex. Component of the 1-MD complex, composed of TIC20-I, TIC214, TIC100 and TIC56. Interacts with the translocating preproteins. Hydrolysis of ATP is essential for the formation of this complex. The 1-MD complex interacts with TIC21. As to expression, preferentially expressed in ovules, and moderately expressed in leaves and siliques.

Its subcellular location is the plastid. It localises to the chloroplast inner membrane. Involved in protein precursor import into chloroplasts. May be part of an intermediate translocation complex acting as a protein-conducting channel at the inner envelope. Plays an important role during embryogenesis and chloroplast biogenesis. The sequence is that of Protein TIC 100 from Arabidopsis thaliana (Mouse-ear cress).